We begin with the raw amino-acid sequence, 870 residues long: MKQGKSFIFYCLVLLLCGFQQLSSAVTASIAKAIKTTDRKQRVSETLPTGLSYRRFYQHIAHLLGWVPAPDLVCRGYFKEPLILTEHPHPGPATKEPAIVTAKGPSMVTAQGVSILRKDVVVTQPGRIVEADKAYIYRDSKTGHVTKIILIGHVRLHEADKRIVADKGTLTLYPKTAILMNAAYHIYNGEPYFYKFKYPFDAWGIAKHAVRDASNVITLRHATYSTCKPTAPAWSMSATTLVLNRNTHRGEAYNMLLHIGRVPIFYFPYFNFPIDNYRKTGFLIPYAGHSSSSGWFFALPFYWNMAPNYDLTLTPEFMSERGLNLQSLFRFLSTKSSGTIYLNYLPNDKVFQQFRETTLSKFPPSVLAEHPVFIPYVDKLKKMKNQRAFFSMNETTLFNSEWSSRVILNYVTDPYFFQDLGGQLGGSSLANQLLNQIDLQYNGLHWQFMGMLQAYQTLHLISQWTTPALDQYSRLPDFNIVGYYPDIARHVDFNFNAEAVNFDYRSDFVPDKPRGQRFHMRPGISFPFYFASGYIIPQLWADATAYNITHFQPGQAHTSSRLLPIFDIDSGLYFDRNFHLGHRSFIQTLEPRFFYLYVPYQNQDRFPNFDTVLLPFSFEQLFALNQFTGNDRLQNANQASFALTSRVLDAQNGSPILTANVGFIYYLENQRVCLTPGCTPSNYHYSPIIGELTFYPFPYWSFTGSLAWDPNLGQTNNTSVELAYNNGGKKADIRYLFVHGNEDSIVTPTTLIVPGNAYSQNTNHVISSGAWPLLKKWNAVGYWDYNITERRTDVYSIGVQYNTCCWALSFSIRRTYAGLKVDPNGALQRQYDTAYGFELQLKGLGNLGTAPISTVTVLDAMNNGVSNDVR.

Residues 1-25 (MKQGKSFIFYCLVLLLCGFQQLSSA) form the signal peptide.

This sequence belongs to the LptD family. In terms of assembly, component of the lipopolysaccharide transport and assembly complex. Interacts with LptE and LptA.

It is found in the cell outer membrane. In terms of biological role, together with LptE, is involved in the assembly of lipopolysaccharide (LPS) at the surface of the outer membrane. The chain is LPS-assembly protein LptD from Coxiella burnetii (strain RSA 493 / Nine Mile phase I).